Consider the following 547-residue polypeptide: Ribosomal lysine N-methyltransferase set10 (547 aa).

One can recognise an SET domain in the interval 17–235 (KSVEFIQSRD…KGNQLFNNYG (219 aa)). Residue Tyr234 participates in S-adenosyl-L-methionine binding.

Belongs to the class V-like SAM-binding methyltransferase superfamily. RKM1 family.

The protein resides in the cytoplasm. The protein localises to the nucleus. Functionally, S-adenosyl-L-methionine-dependent protein-lysine N-methyltransferase that methylates ribosomal protein L23 (rpl23a and rpl23b). This chain is Ribosomal lysine N-methyltransferase set10 (set10), found in Schizosaccharomyces pombe (strain 972 / ATCC 24843) (Fission yeast).